Consider the following 442-residue polypeptide: Serine protease AprX (442 aa).

In terms of domain architecture, Peptidase S8 spans 122 to 439 (KALLDTATEA…AGAVNAENSV (318 aa)). Active-site charge relay system residues include Asp155 and His187. Residues 318–337 (DNNTASSDDDTVASFSSRGP) are disordered. Ser384 functions as the Charge relay system in the catalytic mechanism. The tract at residues 423-442 (EDPNIYGAGAVNAENSVPGQ) is disordered.

Belongs to the peptidase S8 family.

Its subcellular location is the cytoplasm. With respect to regulation, is completely inhibited by phenylmethanesulphonylfluoride (PMSF) in vitro. Displays serine protease activity. Seems to have a broad substrate specificity. The protein is Serine protease AprX (aprX) of Bacillus subtilis (strain 168).